Reading from the N-terminus, the 549-residue chain is Nectin-3 (549 aa).

Positions Met-1–Ala-57 are cleaved as a signal peptide. Positions Gly-58 to Thr-165 constitute an Ig-like V-type domain. The Extracellular segment spans residues Gly-58–Thr-404. Asn-73, Asn-83, Asn-125, Asn-186, Asn-222, and Asn-331 each carry an N-linked (GlcNAc...) asparagine glycan. Cys-78 and Cys-148 are disulfide-bonded. Ig-like C2-type domains follow at residues Pro-170–Arg-258 and Pro-269–Tyr-354. 2 disulfides stabilise this stretch: Cys-193–Cys-246 and Cys-291–Cys-338. The helical transmembrane segment at Ile-405 to Val-425 threads the bilayer. The Cytoplasmic segment spans residues Phe-426 to Val-549.

It belongs to the nectin family. As to quaternary structure, cis- and trans-homodimer. Can form trans-heterodimers with NECTIN1, NECTIN2, PVR, IGSF4B/Necl-1 and with IGSF4. Interaction between NECTIN1 and NECTIN3 on the pre- and postsynaptic sites, respectively, initiates the formation of puncta adherentia junctions between axons and dendrites. Interacts (via Cytoplasmic domain) with AFDN, providing a connection with the actin cytoskeleton. Binds with low affinity to TIGIT. In terms of tissue distribution, ubiquitous with high expression in testes. Localized in spermatids at Sertoli-spermatid junctions. Expressed in ovarian granulosa cells, but only faintly expressed after ovulation.

It is found in the cell membrane. The protein localises to the postsynaptic cell membrane. It localises to the cell junction. Its subcellular location is the adherens junction. Its function is as follows. Cell adhesion molecule that promotes cell-cell adhesion through heterophilic trans-interactions with nectins-like or other nectins, such as trans-interaction with NECTIN2 at Sertoli-spermatid junctions. Trans-interaction with PVR induces activation of CDC42 and RAC small G proteins through common signaling molecules such as SRC and RAP1. Induces endocytosis-mediated down-regulation of PVR from the cell surface, resulting in reduction of cell movement and proliferation. Involved in axon guidance by promoting contacts between the commissural axons and the floor plate cells. Also involved in the formation of cell-cell junctions, including adherens junctions and synapses. Promotes formation of checkerboard-like cellular pattern of hair cells and supporting cells in the auditory epithelium via heterophilic interaction with NECTIN1: NECTIN1 is present in the membrane of hair cells and associates with NECTIN3 on supporting cells, thereby mediating heterotypic adhesion between these two cell types. Plays a role in the morphology of the ciliary body. The chain is Nectin-3 from Mus musculus (Mouse).